We begin with the raw amino-acid sequence, 335 residues long: Phospho-N-acetylmuramoyl-pentapeptide-transferase (335 aa).

10 helical membrane-spanning segments follow: residues 3 to 23 (LTIL…PHFI), 53 to 73 (GGTV…LVYF), 78 to 98 (SLGL…IGFL), 118 to 138 (FTFQ…PSGI), 143 to 163 (VFGY…FWVV), 174 to 194 (GIDG…GVIA), 200 to 220 (FDVL…FLFN), 226 to 246 (IFMG…ISIA), 251 to 271 (WTLL…MLQV), and 314 to 334 (VDAF…AILY).

Belongs to the glycosyltransferase 4 family. MraY subfamily. Requires Mg(2+) as cofactor.

The protein resides in the cell membrane. It catalyses the reaction UDP-N-acetyl-alpha-D-muramoyl-L-alanyl-gamma-D-glutamyl-L-lysyl-D-alanyl-D-alanine + di-trans,octa-cis-undecaprenyl phosphate = Mur2Ac(oyl-L-Ala-gamma-D-Glu-L-Lys-D-Ala-D-Ala)-di-trans,octa-cis-undecaprenyl diphosphate + UMP. Its pathway is cell wall biogenesis; peptidoglycan biosynthesis. Its function is as follows. Catalyzes the initial step of the lipid cycle reactions in the biosynthesis of the cell wall peptidoglycan: transfers peptidoglycan precursor phospho-MurNAc-pentapeptide from UDP-MurNAc-pentapeptide onto the lipid carrier undecaprenyl phosphate, yielding undecaprenyl-pyrophosphoryl-MurNAc-pentapeptide, known as lipid I. The protein is Phospho-N-acetylmuramoyl-pentapeptide-transferase of Streptococcus equi subsp. equi (strain 4047).